We begin with the raw amino-acid sequence, 99 residues long: Goannatyrotoxin-Vere1 (99 aa).

The N-terminal stretch at 1–28 (MIASMKPWPLVMVAALCILFCLGTLVDA) is a signal peptide. The residue at position 64 (tyrosine 64) is a Tyrosine amide. A propeptide spans 68–99 (SSPETLMSELIFGENSNSDHSSRSRFDDSYMW) (C-terminal extension).

This sequence belongs to the NPY family. As to expression, expressed by the mandibular venom gland.

The protein resides in the secreted. Functionally, shows a potent unique triphasic action, rapid biphasic hypertension followed by prolonged hypotension. The chain is Goannatyrotoxin-Vere1 from Varanus eremius (Rusty desert monitor).